The sequence spans 395 residues: Probable beta-1,3-galactosyltransferase 8 (395 aa).

The helical; Signal-anchor for type II membrane protein transmembrane segment at 5-27 threads the bilayer; that stretch reads AASGKAIIVLCLASFLAGSLFMS. An N-linked (GlcNAc...) asparagine glycan is attached at N117.

This sequence belongs to the glycosyltransferase 31 family. It depends on Mn(2+) as a cofactor.

Its subcellular location is the golgi apparatus membrane. The protein operates within protein modification; protein glycosylation. In terms of biological role, beta-1,3-galactosyltransferase that transfers galactose from UDP-galactose to substrates with a terminal glycosyl residue. In Arabidopsis thaliana (Mouse-ear cress), this protein is Probable beta-1,3-galactosyltransferase 8 (B3GALT8).